We begin with the raw amino-acid sequence, 415 residues long: Serine/threonine transporter SstT (415 aa).

Transmembrane regions (helical) follow at residues 21–41, 45–65, 83–103, 142–162, 193–213, 217–237, 299–319, 331–351, and 358–378; these read ILLG…AALA, LGTL…LMLV, ILFL…VLSV, ALLN…GLAF, LGIF…ALWG, LLMV…PLIV, MAGA…TLGI, VVAS…LLLI, and FGIS…IGVL.

The protein belongs to the dicarboxylate/amino acid:cation symporter (DAACS) (TC 2.A.23) family.

The protein localises to the cell inner membrane. It carries out the reaction L-serine(in) + Na(+)(in) = L-serine(out) + Na(+)(out). The catalysed reaction is L-threonine(in) + Na(+)(in) = L-threonine(out) + Na(+)(out). Involved in the import of serine and threonine into the cell, with the concomitant import of sodium (symport system). This Pectobacterium carotovorum subsp. carotovorum (strain PC1) protein is Serine/threonine transporter SstT.